The primary structure comprises 383 residues: PqqA peptide cyclase (383 aa).

A Radical SAM core domain is found at 11–226 (PGPPLWLLAE…TNQWREKLAA (216 aa)). [4Fe-4S] cluster is bound by residues C25, C29, and C32.

It belongs to the radical SAM superfamily. PqqE family. In terms of assembly, interacts with PqqD. The interaction is necessary for activity of PqqE. The cofactor is [4Fe-4S] cluster.

The enzyme catalyses [PQQ precursor protein] + S-adenosyl-L-methionine = E-Y cross-linked-[PQQ precursor protein] + 5'-deoxyadenosine + L-methionine + H(+). The protein operates within cofactor biosynthesis; pyrroloquinoline quinone biosynthesis. Functionally, catalyzes the cross-linking of a glutamate residue and a tyrosine residue in the PqqA protein as part of the biosynthesis of pyrroloquinoline quinone (PQQ). The polypeptide is PqqA peptide cyclase (Azotobacter vinelandii (strain DJ / ATCC BAA-1303)).